The primary structure comprises 1883 residues: DDB1- and CUL4-associated factor homolog 1 (1883 aa).

Disordered regions lie at residues 1–47 (MDGQ…QSVE) and 309–340 (KPGD…HEGA). Residues 37 to 47 (NPEEGEEQSVE) show a composition bias toward acidic residues. Over residues 309-322 (KPGDDNSVRDDPSR) the composition is skewed to basic and acidic residues. Over residues 323–334 (HRLNRSKSRGRG) the composition is skewed to basic residues. Phosphoserine is present on Ser349. The interval 882-924 (NKPPLAQNHQPVPGQATTRPSTDVAVGTQSTGNAPQTPVAPAS) is disordered. A compositionally biased stretch (polar residues) spans 888–917 (QNHQPVPGQATTRPSTDVAVGTQSTGNAPQ). In terms of domain architecture, LisH spans 1087 to 1119 (DSKELLLLIHEHLQASGLGDTASALLKEAQLTP). Disordered stretches follow at residues 1157-1202 (TSKP…QWPS), 1214-1260 (PKIN…ALPQ), and 1310-1377 (SELR…NPER). Positions 1238 to 1251 (LTFSPSFSSQSRKQ) are enriched in low complexity. Over residues 1310 to 1329 (SELRDSSVPGKRIDLGERRN) the composition is skewed to basic and acidic residues. Residues 1330–1362 (STFADGSGLQTPASALDANQSGSSRLGQMTPAS) show a composition bias toward polar residues. WD repeat units follow at residues 1464 to 1503 (DETA…MLES), 1506 to 1546 (GHQA…GGPR), 1548 to 1586 (SFDG…TCSP), 1587 to 1626 (CQKL…RRIP), and 1633 to 1671 (DQFT…VPSL). 2 consecutive short sequence motifs (DWD box) follow at residues 1619-1626 (VLWDRRIP) and 1655-1662 (EIWDMRTF). Residues 1763–1883 (YEIGRRRPTD…DDYRDNIRSS (121 aa)) are disordered. 2 stretches are compositionally biased toward acidic residues: residues 1773–1796 (DDSD…EDDL) and 1808–1864 (DSGD…DGEM).

Belongs to the VPRBP/DCAF1 family. In terms of assembly, component of the CUL4-RBX1-DDB1-DCAF1 E3 ubiquitin-protein ligase complex. Interacts with DDB1A through its DWD motifs. As to expression, ubiquitous but predominantly expressed in the inflorescence and roots.

Its subcellular location is the nucleus. It participates in protein modification; protein ubiquitination. Its function is as follows. Component of the CUL4-RBX1-DDB1-DCAF1 E3 ubiquitin-protein ligase complex, DCAF1 may function as the substrate recognition module within this complex. Appears to be required for plant embryogenesis and to affect several other developmental processes including leaf, shoot, and flower development. In Arabidopsis thaliana (Mouse-ear cress), this protein is DDB1- and CUL4-associated factor homolog 1 (DCAF1).